The chain runs to 134 residues: uncharacterized protein (134 aa).

It localises to the cell membrane. Functionally, may have a role in the regulation of NDH-1 biosynthesis. This is an uncharacterized protein from Paracoccus denitrificans.